A 1172-amino-acid chain; its full sequence is Putative cadmium/zinc-transporting ATPase HMA4 (1172 aa).

The Cytoplasmic portion of the chain corresponds to 1–93 (MALQNKEEEK…VRVNGETSFK (93 aa)). In terms of domain architecture, HMA spans 17 to 83 (QKSYFDVLGI…ALNEARLEAN (67 aa)). The chain crosses the membrane as a helical span at residues 94 to 115 (NKWPSPFAVVSGLLLLLSFLKF). Topologically, residues 116–118 (VYS) are extracellular. A helical membrane pass occupies residues 119-138 (PLRWLAVAAVAAGIYPILAK). The Cytoplasmic portion of the chain corresponds to 139-145 (AFASIKR). The chain crosses the membrane as a helical span at residues 146–166 (PRIDINILVIITVIATLAMQD). Position 167 (phenylalanine 167) is a topological domain, extracellular. The chain crosses the membrane as a helical span at residues 168–188 (MEAAAVVFLFTISDWLETRAS). At 189–314 (YKATSVMQSL…KTKSQRLIDK (126 aa)) the chain is on the cytoplasmic side. Residues 315-337 (CSQYYTPAIILVSACVAIVPVIM) form a helical membrane-spanning segment. Residues 338 to 345 (KVHNLKHW) are Extracellular-facing. A helical membrane pass occupies residues 346-363 (FHLALVVLVSGCPCGLIL). Over 364–656 (STPVATFCAL…KLARRARRKV (293 aa)) the chain is Cytoplasmic. The 4-aspartylphosphate intermediate role is filled by aspartate 401. Mg(2+) contacts are provided by aspartate 601 and aspartate 605. Residues 657–676 (VENVCLSIILKAGILALAFA) form a helical membrane-spanning segment. Residues 677–680 (GHPL) are Extracellular-facing. Residues 681–700 (IWAAVLVDVGTCLLVIFNSM) form a helical membrane-spanning segment. At 701-1172 (LLLREKKKIG…HHHHHHHVSA (472 aa)) the chain is on the cytoplasmic side.

The protein belongs to the cation transport ATPase (P-type) (TC 3.A.3) family. Type IB subfamily.

The protein resides in the membrane. It catalyses the reaction Zn(2+)(in) + ATP + H2O = Zn(2+)(out) + ADP + phosphate + H(+). The enzyme catalyses Cd(2+)(in) + ATP + H2O = Cd(2+)(out) + ADP + phosphate + H(+). Involved in cadmium/zinc transport. The sequence is that of Putative cadmium/zinc-transporting ATPase HMA4 (HMA4) from Arabidopsis thaliana (Mouse-ear cress).